The chain runs to 165 residues: Bark lectin isoform 1 (165 aa).

2 N-linked (GlcNAc...) asparagine glycosylation sites follow: N27 and N57. 2 disulfides stabilise this stretch: C33–C80 and C126–C133.

The protein belongs to the protease inhibitor I3 (leguminous Kunitz-type inhibitor) family. In terms of assembly, dimer.

Functionally, glucose and N-acetylglucosamine binding lectin. Has hemagglutinating activity against human and rabbit erythrocytes which does not require divalent cations. Inhibits factor Xa and, to a lesser extent, trypsin. Does not inhibit neutrophil elastase, human plasma kallikrein, papain, human plasmin, porcine pancreatic kallikrein and bovin chymotrypsin. Has insecticidal activity against the termite species N.corniger. Induces apoptosis in prostrate cancer cell lines DU145 and PC3. The protein is Bark lectin isoform 1 of Crateva tapia (Garlic-pear tree).